The following is a 239-amino-acid chain: Probable transcriptional regulatory protein EF_2866 (239 aa).

The protein belongs to the TACO1 family. YeeN subfamily.

The protein localises to the cytoplasm. The polypeptide is Probable transcriptional regulatory protein EF_2866 (Enterococcus faecalis (strain ATCC 700802 / V583)).